The primary structure comprises 433 residues: Trigger factor (433 aa).

The region spanning 163–248 (GDTVNIDFSG…VNEIKFKEVP (86 aa)) is the PPIase FKBP-type domain.

The protein belongs to the FKBP-type PPIase family. Tig subfamily.

The protein localises to the cytoplasm. It carries out the reaction [protein]-peptidylproline (omega=180) = [protein]-peptidylproline (omega=0). Its function is as follows. Involved in protein export. Acts as a chaperone by maintaining the newly synthesized protein in an open conformation. Functions as a peptidyl-prolyl cis-trans isomerase. The protein is Trigger factor of Staphylococcus aureus (strain COL).